The following is a 157-amino-acid chain: Transcriptional repressor NrdR (157 aa).

Residues 3–34 (CPFCSATDTKVIDSRLVADGHQVRRRRECLLC) fold into a zinc finger. Positions 49–139 (PRVVKQDGSR…VYRAFEDVSE (91 aa)) constitute an ATP-cone domain.

Belongs to the NrdR family. Requires Zn(2+) as cofactor.

Functionally, negatively regulates transcription of bacterial ribonucleotide reductase nrd genes and operons by binding to NrdR-boxes. The polypeptide is Transcriptional repressor NrdR (Shewanella loihica (strain ATCC BAA-1088 / PV-4)).